We begin with the raw amino-acid sequence, 185 residues long: MIVLGIDPGSRRCGYGVVAREGARLTVVESGVLVPGDLPMAQRLGRILDGLDALIARARPAEASVEAVFSGASPRSALVLGQARGVALAAAARAGLPVFEYAPSEVKLAFTGNGRAGKDQMLRTARMLLGAAPGLSDEADALAIAVCHLARRAFAVPAAGAGRAAAARAAAARLRPSRRDHRGTP.

Catalysis depends on residues Asp-7, Glu-66, and Asp-137. The Mg(2+) site is built by Asp-7, Glu-66, and Asp-137.

The protein belongs to the RuvC family. As to quaternary structure, homodimer which binds Holliday junction (HJ) DNA. The HJ becomes 2-fold symmetrical on binding to RuvC with unstacked arms; it has a different conformation from HJ DNA in complex with RuvA. In the full resolvosome a probable DNA-RuvA(4)-RuvB(12)-RuvC(2) complex forms which resolves the HJ. Mg(2+) serves as cofactor.

The protein localises to the cytoplasm. The enzyme catalyses Endonucleolytic cleavage at a junction such as a reciprocal single-stranded crossover between two homologous DNA duplexes (Holliday junction).. In terms of biological role, the RuvA-RuvB-RuvC complex processes Holliday junction (HJ) DNA during genetic recombination and DNA repair. Endonuclease that resolves HJ intermediates. Cleaves cruciform DNA by making single-stranded nicks across the HJ at symmetrical positions within the homologous arms, yielding a 5'-phosphate and a 3'-hydroxyl group; requires a central core of homology in the junction. The consensus cleavage sequence is 5'-(A/T)TT(C/G)-3'. Cleavage occurs on the 3'-side of the TT dinucleotide at the point of strand exchange. HJ branch migration catalyzed by RuvA-RuvB allows RuvC to scan DNA until it finds its consensus sequence, where it cleaves and resolves the cruciform DNA. In Anaeromyxobacter dehalogenans (strain 2CP-C), this protein is Crossover junction endodeoxyribonuclease RuvC.